Here is a 348-residue protein sequence, read N- to C-terminus: Phosphoribosylformylglycinamidine cyclo-ligase (348 aa).

The protein belongs to the AIR synthase family.

The protein resides in the cytoplasm. It carries out the reaction 2-formamido-N(1)-(5-O-phospho-beta-D-ribosyl)acetamidine + ATP = 5-amino-1-(5-phospho-beta-D-ribosyl)imidazole + ADP + phosphate + H(+). Its pathway is purine metabolism; IMP biosynthesis via de novo pathway; 5-amino-1-(5-phospho-D-ribosyl)imidazole from N(2)-formyl-N(1)-(5-phospho-D-ribosyl)glycinamide: step 2/2. The protein is Phosphoribosylformylglycinamidine cyclo-ligase of Cereibacter sphaeroides (strain ATCC 17029 / ATH 2.4.9) (Rhodobacter sphaeroides).